The following is a 477-amino-acid chain: tRNA-2-methylthio-N(6)-dimethylallyladenosine synthase (477 aa).

In terms of domain architecture, MTTase N-terminal spans 9-129 (RKLHIKSYGC…LPQLLARAKT (121 aa)). Cys18, Cys54, Cys92, Cys170, Cys174, and Cys177 together coordinate [4Fe-4S] cluster. The 231-residue stretch at 156 to 386 (RSRGISAFVT…QLQNLIDSQQ (231 aa)) folds into the Radical SAM core domain. One can recognise a TRAM domain in the interval 391 to 453 (RTALGRTIDV…RYSLFGTLAS (63 aa)). The segment at 454–477 (KPTSGEPSNHAATGGAQFQTTAGA) is disordered. A compositionally biased stretch (low complexity) spans 464–477 (AATGGAQFQTTAGA).

It belongs to the methylthiotransferase family. MiaB subfamily. In terms of assembly, monomer. Requires [4Fe-4S] cluster as cofactor.

The protein resides in the cytoplasm. It catalyses the reaction N(6)-dimethylallyladenosine(37) in tRNA + (sulfur carrier)-SH + AH2 + 2 S-adenosyl-L-methionine = 2-methylsulfanyl-N(6)-dimethylallyladenosine(37) in tRNA + (sulfur carrier)-H + 5'-deoxyadenosine + L-methionine + A + S-adenosyl-L-homocysteine + 2 H(+). Functionally, catalyzes the methylthiolation of N6-(dimethylallyl)adenosine (i(6)A), leading to the formation of 2-methylthio-N6-(dimethylallyl)adenosine (ms(2)i(6)A) at position 37 in tRNAs that read codons beginning with uridine. This chain is tRNA-2-methylthio-N(6)-dimethylallyladenosine synthase, found in Nitrobacter winogradskyi (strain ATCC 25391 / DSM 10237 / CIP 104748 / NCIMB 11846 / Nb-255).